Reading from the N-terminus, the 494-residue chain is GDP-fucose protein O-fucosyltransferase 4 (494 aa).

The Cytoplasmic segment spans residues 1 to 7 (MAARYTE). The helical; Signal-anchor for type II membrane protein transmembrane segment at 8 to 24 (AVLAALGVLSVCSASSS) threads the bilayer. Over 25–494 (SGSGASGKAG…EIFMKRNKNL (470 aa)) the chain is Lumenal. Asn-167 carries N-linked (GlcNAc...) asparagine glycosylation. A disulfide bond links Cys-390 and Cys-393.

It belongs to the glycosyltransferase 10 family.

The protein localises to the endoplasmic reticulum membrane. It catalyses the reaction L-threonyl-[protein] + GDP-beta-L-fucose = 3-O-(alpha-L-fucosyl)-L-threonyl-[protein] + GDP + H(+). The catalysed reaction is L-seryl-[protein] + GDP-beta-L-fucose = 3-O-(alpha-L-fucosyl)-L-seryl-[protein] + GDP + H(+). It participates in protein modification; protein glycosylation. Protein O-fucosyltransferase that specifically catalyzes O-fucosylation of serine or threonine residues in EMI domains of target proteins, such as MMRN1, MMRN2 and EMID1. Attaches fucose through an O-glycosidic linkage. O-fucosylation of EMI domain-containing proteins may be required for facilitating protein folding and secretion. Also shows minor alpha-(1,3)-fucosyltransferase activity toward activity toward biantennary N-glycan acceptors. However, this was tested with a library of synthetic substrates and this activity is unsure in vivo. The polypeptide is GDP-fucose protein O-fucosyltransferase 4 (Fut11) (Rattus norvegicus (Rat)).